The primary structure comprises 143 residues: Transcriptional regulator MraZ (143 aa).

SpoVT-AbrB domains lie at E5 to E47 and A76 to L119.

The protein belongs to the MraZ family. As to quaternary structure, forms oligomers.

It is found in the cytoplasm. Its subcellular location is the nucleoid. The chain is Transcriptional regulator MraZ from Macrococcus caseolyticus (strain JCSC5402) (Macrococcoides caseolyticum).